Here is a 73-residue protein sequence, read N- to C-terminus: UPF0346 protein SAS1364 (73 aa).

The protein belongs to the UPF0346 family.

The polypeptide is UPF0346 protein SAS1364 (Staphylococcus aureus (strain MSSA476)).